Here is a 220-residue protein sequence, read N- to C-terminus: Protein-L-isoaspartate O-methyltransferase (220 aa).

Ser69 is a catalytic residue.

It belongs to the methyltransferase superfamily. L-isoaspartyl/D-aspartyl protein methyltransferase family.

It localises to the cytoplasm. It carries out the reaction [protein]-L-isoaspartate + S-adenosyl-L-methionine = [protein]-L-isoaspartate alpha-methyl ester + S-adenosyl-L-homocysteine. Functionally, catalyzes the methyl esterification of L-isoaspartyl residues in peptides and proteins that result from spontaneous decomposition of normal L-aspartyl and L-asparaginyl residues. It plays a role in the repair and/or degradation of damaged proteins. This Alcanivorax borkumensis (strain ATCC 700651 / DSM 11573 / NCIMB 13689 / SK2) protein is Protein-L-isoaspartate O-methyltransferase.